Reading from the N-terminus, the 177-residue chain is Large ribosomal subunit protein uL6 (177 aa).

Belongs to the universal ribosomal protein uL6 family. In terms of assembly, part of the 50S ribosomal subunit.

This protein binds to the 23S rRNA, and is important in its secondary structure. It is located near the subunit interface in the base of the L7/L12 stalk, and near the tRNA binding site of the peptidyltransferase center. In Cupriavidus necator (strain ATCC 17699 / DSM 428 / KCTC 22496 / NCIMB 10442 / H16 / Stanier 337) (Ralstonia eutropha), this protein is Large ribosomal subunit protein uL6.